Consider the following 447-residue polypeptide: N-succinylarginine dihydrolase (447 aa).

Residues 19–28 (AGLSFGNEAS), Asn-110, and 137–138 (HR) each bind substrate. Residue Glu-174 is part of the active site. Arg-212 is a substrate binding site. The active site involves His-248. Residues Asp-250 and Asn-359 each coordinate substrate. The Nucleophile role is filled by Cys-365.

This sequence belongs to the succinylarginine dihydrolase family. Homodimer.

It carries out the reaction N(2)-succinyl-L-arginine + 2 H2O + 2 H(+) = N(2)-succinyl-L-ornithine + 2 NH4(+) + CO2. It participates in amino-acid degradation; L-arginine degradation via AST pathway; L-glutamate and succinate from L-arginine: step 2/5. Its function is as follows. Catalyzes the hydrolysis of N(2)-succinylarginine into N(2)-succinylornithine, ammonia and CO(2). In Escherichia coli O8 (strain IAI1), this protein is N-succinylarginine dihydrolase.